The following is a 307-amino-acid chain: D-alanine--D-alanine ligase (307 aa).

In terms of domain architecture, ATP-grasp spans 101 to 301 (KTVMRAAGVS…FGELVRWMVE (201 aa)). 127-182 (PLTPPYVVKPIAEGSSMGVIIVREERSHPPQILASDEWVYGEEVLAETYIAGRELT) contributes to the ATP binding site. Residues Asp-251, Glu-268, and Asn-270 each contribute to the Mg(2+) site.

Belongs to the D-alanine--D-alanine ligase family. The cofactor is Mg(2+). Mn(2+) serves as cofactor.

The protein localises to the cytoplasm. It catalyses the reaction 2 D-alanine + ATP = D-alanyl-D-alanine + ADP + phosphate + H(+). It participates in cell wall biogenesis; peptidoglycan biosynthesis. Its function is as follows. Cell wall formation. In Methylorubrum populi (strain ATCC BAA-705 / NCIMB 13946 / BJ001) (Methylobacterium populi), this protein is D-alanine--D-alanine ligase.